Consider the following 426-residue polypeptide: MLPSASRERPGYRAGVAAPDLLDPKSAAQNSKPRLSFSTKPTVLASRVESDTTINVMKWKTVSTIFLVVVLYLIIGATVFKALEQPHEISQRTTIVIQKQTFISQHSCVNSTELDELIQQIVAAINAGIIPLGNTSNQISHWDLGSSFFFAGTVITTIGFGNISPRTEGGKIFCIIYALLGIPLFGFLLAGVGDQLGTIFGKGIAKVEDTFIKWNVSQTKIRIISTIIFILFGCVLFVALPAIIFKHIEGWSALDAIYFVVITLTTIGFGDYVAGGSDIEYLDFYKPVVWFWILVGLAYFAAVLSMIGDWLRVISKKTKEEVGEFRAHAAEWTANVTAEFKETRRRLSVEIYDKFQRATSIKRKLSAELAGNHNQELTPCRRTLSVNHLTSERDVLPPLLKTESIYLNGLTPHCAGEEIAVIENIK.

Topologically, residues 1–61 (MLPSASRERP…TTINVMKWKT (61 aa)) are cytoplasmic. 2 important for GNG4 binding and L-glutamate release in astrocytes regions span residues 17–38 (AAPD…LSFS) and 51–61 (DTTINVMKWKT). Residues 62–82 (VSTIFLVVVLYLIIGATVFKA) traverse the membrane as a helical segment. N-linked (GlcNAc...) asparagine glycans are attached at residues Asn110 and Asn134. The pore-forming intramembrane region spans 144–170 (LGSSFFFAGTVITTIGFGNISPRTEGG). K(+) is bound by residues Thr157, Ile158, Gly159, and Phe160. Residues 157–162 (TIGFGN) are selectivity filter 1. The helical transmembrane segment at 172–192 (IFCIIYALLGIPLFGFLLAGV) threads the bilayer. Over 193–223 (GDQLGTIFGKGIAKVEDTFIKWNVSQTKIRI) the chain is Cytoplasmic. The chain crosses the membrane as a helical span at residues 224 to 244 (ISTIIFILFGCVLFVALPAII). Positions 253-283 (ALDAIYFVVITLTTIGFGDYVAGGSDIEYLD) form an intramembrane region, pore-forming. K(+) is bound by residues Thr266, Ile267, Gly268, and Phe269. The tract at residues 266-271 (TIGFGD) is selectivity filter 2. The helical transmembrane segment at 288–308 (VVWFWILVGLAYFAAVLSMIG) threads the bilayer. At 309–426 (DWLRVISKKT…EEIAVIENIK (118 aa)) the chain is on the cytoplasmic side. The tract at residues 313–326 (VISKKTKEEVGEFR) is interaction with AKAP5. Positions 337 to 385 (TAEFKETRRRLSVEIYDKFQRATSIKRKLSAELAGNHNQELTPCRRTLS) are essential for chloroform and halothane sensitivity. At Ser348 the chain carries Phosphoserine; by PKA.

The protein belongs to the two pore domain potassium channel (TC 1.A.1.8) family. In terms of assembly, homodimer; disulfide-linked. Forms heterodimers with other 2-pore domain K(+) channel subunits, such as KCNK1, KCNK4, KCNK10 and KCNK18. Interacts with AKAP5; the channel is recruited to postsynaptic microdomains by AKAP5 where it can integrate neurotransmitter receptor signals. Part of a complex composed of AKAP5 and ADRB2. Upon AKAP5 binding, the channel is no longer sensitive to intracellular acidification, membrane stretch or arachidonic acid stimuli. Interacts with POPDC1; the interaction enhances KCNK2 surface expression and is inhibited by cAMP. Interacts (via N-terminus) with G-protein subunit GNG4 (via C-terminus); this interaction confers ion selectivity to L-glutamate and Cl(-) anions. In terms of processing, phosphorylation at Ser-348 controls the reversible conversion from a leak channel to a voltage-dependent channel. In terms of tissue distribution, detected in kidney, adrenal gland and brain where it is preferentially expressed in the amygdala but not found in thalamus, hypothalamus, hippocampus or substantia nigra.

It is found in the cell membrane. The protein localises to the endoplasmic reticulum membrane. The protein resides in the cell projection. Its subcellular location is the axon. It localises to the dendrite. It is found in the postsynaptic density membrane. The protein localises to the sarcolemma. It carries out the reaction K(+)(in) = K(+)(out). It catalyses the reaction L-glutamate(out) = L-glutamate(in). The catalysed reaction is chloride(in) = chloride(out). The enzyme catalyses Rb(+)(in) = Rb(+)(out). It carries out the reaction Cs(+)(in) = Cs(+)(out). With respect to regulation, activated by various stimuli including intracellular acidic pH, mechanical stretch and polyunsaturated fatty acids such as arachidonic acid. Activated by volatile anesthetics such as chloroform, halothane, and isoflurane. In terms of biological role, k(+) channel that conducts voltage-dependent outward rectifying currents upon membrane depolarization. Voltage sensing is coupled to K(+) electrochemical gradient in an 'ion flux gating' mode where outward but not inward ion flow opens the gate. Converts to voltage-independent 'leak' conductance mode upon stimulation by various stimuli including mechanical membrane stretch, acidic pH, heat and lipids. Reversibly converts between a voltage-insensitive K(+) 'leak' channel and a voltage-dependent outward rectifying K(+) channel in a phosphorylation-dependent manner. Homo- and heterodimerizes to form functional channels with distinct regulatory and gating properties. In trigeminal ganglia sensory neurons, the heterodimer of KCNK2/TREK-1 and KCNK18/TRESK inhibits neuronal firing and neurogenic inflammation by stabilizing the resting membrane potential at K(+) equilibrium potential as well as by regulating the threshold of action potentials and the spike frequency. At trigeminal A-beta afferent nerves, the heterodimer of KCNK2/TREK-1 and KCNK4/TRAAK is mostly coexpressed at nodes of Ranvier where it conducts voltage-independent mechanosensitive and thermosensitive currents, allowing rapid action potential repolarization, high speed and high frequence saltatory conduction on myelinated nerves to ensure prompt sensory responses. In hippocampal astrocytes, the heterodimer of KCNK2/TREK-1 and KCNK1/TWIK-1 allows passive K(+) conductance under basal conditions, but changes ion selectivity and becomes permeable to L-glutamate and Cl(-) ions upon binding to G-protein subunit GNG4 in stimulated astrocytes. Mediates rapid L-glutamate release in response to activation of G-protein-coupled receptors, such as F2R and CNR1. In hippocampal pyramidal neurons, the homodimer of KCNK2/TREK-1 contributes to gamma-aminobutyric acid (GABA) B-induced slow inhibitory postsynaptic potential. Associates with AKAP5 and Gs-protein-coupled receptor B2AR at postsynaptic dense bodies and converts to a leak channel no longer sensitive to stimulation by arachidonic acid, acidic pH or mechanical stress, nor inhibited by Gq-coupled receptors but still under the negative control of Gs-coupled receptors. Permeable to other monovalent cations such as Rb(+) and Cs(+). Does not display channel activity but reduces the channel activity of isoform 1 and isoform 2 and reduces cell surface expression of isoform 2. The chain is Potassium channel subfamily K member 2 from Homo sapiens (Human).